Consider the following 147-residue polypeptide: CLAVATA3/ESR (CLE)-related protein 4C (147 aa).

A signal peptide spans 1 to 21 (MATNTMLCLFVISVVLALAFA). The interval 21 to 83 (ATNKKGDEEP…SNQLPNNNWM (63 aa)) is required for secretion from the host cytoplasm to the host apoplasm. Asn-32 is a glycosylation site (N-linked (GlcNAc...) asparagine). Disordered regions lie at residues 57–86 (GADA…MAPP) and 116–147 (RKTG…PIHH). A compositionally biased stretch (basic and acidic residues) spans 125-137 (HHEETTLEQEKRV). A CLE motif is present at residues 136 to 147 (RVAGAGPDPIHH).

It belongs to the CLV3/ESR signal peptide family. In terms of tissue distribution, highly expressed exclusively within the dorsal esophageal gland cell during syncytium formation in host plants.

The protein resides in the secreted. The protein localises to the host cytoplasm. It is found in the host extracellular space. It localises to the extracellular space. Its subcellular location is the apoplast. Mimics host plant CLE extracellular signal peptides that regulate cell fate. May play a role in the differentiation or division of feeding cells (syncytia) induced in plant roots during infection. This chain is CLAVATA3/ESR (CLE)-related protein 4C (CLE-4C), found in Globodera rostochiensis (Golden nematode worm).